The primary structure comprises 347 residues: Succinylglutamate desuccinylase (347 aa).

Zn(2+)-binding residues include H64, E67, and H159. Residue E222 is part of the active site.

Belongs to the AspA/AstE family. Succinylglutamate desuccinylase subfamily. Requires Zn(2+) as cofactor.

The enzyme catalyses N-succinyl-L-glutamate + H2O = L-glutamate + succinate. It participates in amino-acid degradation; L-arginine degradation via AST pathway; L-glutamate and succinate from L-arginine: step 5/5. Functionally, transforms N(2)-succinylglutamate into succinate and glutamate. The chain is Succinylglutamate desuccinylase from Burkholderia cenocepacia (strain ATCC BAA-245 / DSM 16553 / LMG 16656 / NCTC 13227 / J2315 / CF5610) (Burkholderia cepacia (strain J2315)).